A 216-amino-acid chain; its full sequence is MOB kinase activator-like 2A (216 aa).

C81, C86, H162, and H167 together coordinate Zn(2+).

Belongs to the MOB1/phocein family.

Its subcellular location is the nucleus. The sequence is that of MOB kinase activator-like 2A from Arabidopsis thaliana (Mouse-ear cress).